Consider the following 280-residue polypeptide: Golgi to ER traffic protein 2 (280 aa).

Composition is skewed to basic and acidic residues over residues 1–17, 44–62, and 71–80; these read MSLS…ERRQ, SALD…EAVK, and AKKESTAQAK. Positions 1-80 are disordered; it reads MSLSEAEKRK…AKKESTAQAK (80 aa). Residues 1 to 146 are Cytoplasmic-facing; the sequence is MSLSEAEKRK…VEYHKYRVNT (146 aa). Residues 147–166 traverse the membrane as a helical segment; the sequence is LTAKTTLVKWIVLLAYIFLL. Over 167 to 191 the chain is Lumenal; the sequence is TRTDDTYFPFVVRSYLPEVFTSQSS. The helical transmembrane segment at 192-211 threads the bilayer; that stretch reads FFSIFLTFEILATSIYYQLS. Residues 212–258 lie on the Cytoplasmic side of the membrane; the sequence is VGVERETGVKTLQDTSKIVSLVSMVPEGILPIADLRGKVILAMKYWN. Residues 259-279 traverse the membrane as a helical segment; sequence IIAMMIGDVCFVLVAIGLVSQ. Ile-280 is a topological domain (lumenal).

Belongs to the GET2 family. As to quaternary structure, component of the Golgi to ER traffic (GET) complex, which is composed of GET1, GET2 and GET3. Within the complex, GET1 and GET2 form a heterotetramer which is stabilized by phosphatidylinositol binding and which binds to the GET3 homodimer.

Its subcellular location is the endoplasmic reticulum membrane. The protein resides in the golgi apparatus membrane. Functionally, required for the post-translational delivery of tail-anchored (TA) proteins to the endoplasmic reticulum. Together with GET1, acts as a membrane receptor for soluble GET3, which recognizes and selectively binds the transmembrane domain of TA proteins in the cytosol. The GET complex cooperates with the HDEL receptor ERD2 to mediate the ATP-dependent retrieval of resident ER proteins that contain a C-terminal H-D-E-L retention signal from the Golgi to the ER. This Candida glabrata (strain ATCC 2001 / BCRC 20586 / JCM 3761 / NBRC 0622 / NRRL Y-65 / CBS 138) (Yeast) protein is Golgi to ER traffic protein 2.